The primary structure comprises 196 residues: Imidazoleglycerol-phosphate dehydratase (196 aa).

This sequence belongs to the imidazoleglycerol-phosphate dehydratase family.

It localises to the cytoplasm. It catalyses the reaction D-erythro-1-(imidazol-4-yl)glycerol 3-phosphate = 3-(imidazol-4-yl)-2-oxopropyl phosphate + H2O. Its pathway is amino-acid biosynthesis; L-histidine biosynthesis; L-histidine from 5-phospho-alpha-D-ribose 1-diphosphate: step 6/9. The chain is Imidazoleglycerol-phosphate dehydratase from Dehalococcoides mccartyi (strain ATCC BAA-2266 / KCTC 15142 / 195) (Dehalococcoides ethenogenes (strain 195)).